A 577-amino-acid polypeptide reads, in one-letter code: Monooxygenase PC-14 (577 aa).

The protein belongs to the FMO family. Requires FAD as cofactor.

It functions in the pathway secondary metabolite biosynthesis. In terms of biological role, monooxygenase; part of the gene cluster that mediates the biosynthesis of the indole diterpenes penitrems. The geranylgeranyl diphosphate (GGPP) synthase penG catalyzes the first step in penitrem biosynthesis via conversion of farnesyl pyrophosphate and isopentyl pyrophosphate into geranylgeranyl pyrophosphate (GGPP). Condensation of indole-3-glycerol phosphate with GGPP by the prenyl transferase penC then forms 3-geranylgeranylindole (3-GGI). Epoxidation by the FAD-dependent monooxygenase penM leads to a epoxidized-GGI that is substrate of the terpene cyclase penB for cyclization to yield paspaline. Paspaline is subsequently converted to 13-desoxypaxilline by the cytochrome P450 monooxygenase penP, the latter being then converted to paxilline by the cytochrome P450 monooxygenase penQ. Paxilline is converted to beta-paxitriol via C-10 ketoreduction by the short-chain dehydrogenase PC-15 which can be monoprenylated at the C-20 by the indole diterpene prenyltransferase penD. A two-step elimination (acetylation and elimination) process performed by the O-acetyltransferase PC-16 and the P.simplicissimum ptmI-ortholog not yet identified in P.crustosum, leads to the production of the prenylated form of penijanthine. The FAD-linked oxidoreductase ptmO then converts the prenylated form of penijanthine into PC-M5 which is in turn transformed into PC-M4 by the aromatic dimethylallyltransferase PC-22. A series of oxidation steps involving 4 cytochrome P450 monooxygenases (PC-21, PC-05, PC-23, PC-20) and a FAD-dependent monooxygenase (PC-14) are required for the transformation of PC-M4 to penitrems A and E. Synthesis of these final products is proposed to proceed via penitrems D and C (PC-21, PC-05, PC-14) and penitrems B and F (PC-21, PC-05, PC-14, PC-23). This is Monooxygenase PC-14 from Penicillium crustosum (Blue mold fungus).